Reading from the N-terminus, the 35-residue chain is Photosystem II reaction center protein T (35 aa).

Residues 3–23 (ALVYTFLLVSTLGIIFFAIFF) traverse the membrane as a helical segment.

The protein belongs to the PsbT family. PSII is composed of 1 copy each of membrane proteins PsbA, PsbB, PsbC, PsbD, PsbE, PsbF, PsbH, PsbI, PsbJ, PsbK, PsbL, PsbM, PsbT, PsbY, PsbZ, Psb30/Ycf12, at least 3 peripheral proteins of the oxygen-evolving complex and a large number of cofactors. It forms dimeric complexes.

Its subcellular location is the plastid. The protein resides in the chloroplast thylakoid membrane. Found at the monomer-monomer interface of the photosystem II (PS II) dimer, plays a role in assembly and dimerization of PSII. PSII is a light-driven water plastoquinone oxidoreductase, using light energy to abstract electrons from H(2)O, generating a proton gradient subsequently used for ATP formation. The sequence is that of Photosystem II reaction center protein T from Cabomba caroliniana (Carolina fanwort).